We begin with the raw amino-acid sequence, 76 residues long: DNA-directed RNA polymerase subunit epsilon (76 aa).

The protein belongs to the RNA polymerase subunit epsilon family. As to quaternary structure, RNAP is composed of a core of 2 alpha, a beta and a beta' subunit. The core is associated with a delta subunit, and at least one of epsilon or omega. When a sigma factor is associated with the core the holoenzyme is formed, which can initiate transcription.

It catalyses the reaction RNA(n) + a ribonucleoside 5'-triphosphate = RNA(n+1) + diphosphate. A non-essential component of RNA polymerase (RNAP). This Streptococcus pyogenes serotype M1 protein is DNA-directed RNA polymerase subunit epsilon.